The primary structure comprises 127 residues: Modulator protein MzrA (127 aa).

Residues 1–10 (MLKPRITARQ) lie on the Cytoplasmic side of the membrane. A helical membrane pass occupies residues 11 to 31 (LIWISAFLLMLTILMMTWSTL). Topologically, residues 32–127 (RQQESTLAIR…RLRESSHRFG (96 aa)) are periplasmic.

Belongs to the MzrA family. Interacts with EnvZ.

It is found in the cell inner membrane. Functionally, modulates the activity of the EnvZ/OmpR two-component regulatory system, probably by directly modulating EnvZ enzymatic activity and increasing stability of phosphorylated OmpR. This chain is Modulator protein MzrA, found in Salmonella agona (strain SL483).